The sequence spans 1193 residues: MAPPVRPGMLPLLLLLLLPPLGSVPGVWSFSELFFMKEPQDATVTRKDPVFLDCQAHGEGPIKVTWLKNGAKLSENKRIQVLSNGSLYISEAEGRRGEQSDEGFYQCLAVNKYGAILSQKAHLTLSTISAFEVHPVSTEVPEGGVARFSCKISSTPPAVITWEFNRTALPMTMDSRVTALPSGVLQIYDAGPEDAGKYRCVAATHAHKRKSMEASLTIVPANETRSFYMPTIIASPQNVTASLHQTVVLECMATGYPKPIISWSRLDHKSIDVFNTRVLGNGNLIISDVKLQHAGVYVCRATTPGTRNFTVAMATLTVLAPPSFVEWPESLTRPRAGTARFVCQAEGIPSPKMSWLKNGRRIHSNGRIKMYNSKLVINQIIPEDDAIYQCMAENSQGSVLSRARLTVVMSEDRPSAPYNVHAETMSSSAILLAWERPLYNSDKVIAYSVHYMKAEGLNNEEYQVVLGNDTTHYIIDDLEPDSNYTFYIVAYMPMGASQMSDHVTQNTLEDVPLRPPEISLTSRSPTDILISWLPIPAKYRRGQVVLYRLSFRLSTENSIQVVELPGTVHEYLLEGLEPDSVYLVRITAATRVGLGESSVWTSHRTPKATSVKAPKSPELHLEPLNCTTISVRWLQDTEDPAAIRGYKLFYKEEGQQEHGPIFLDTGDLLYTLSGLDPRRKYHVRLLAYNNLEDGYQADQTVSTPGCVSVRDRMVPPPPPPHHLYAKANTSSSIFLHWRRPAFTTAQVINYTIRCNPVGLQNASLVLYLQTSETHMLVQGLEPNTKYEFAVRLHVDQLSSPWSPVVYHTTLPEAPTGPPVGVKVTLIEDDTALVSWKPPDGPETVVTRYTILYASRKAWIAGEWQVLHREGAITMALLENLVAGNVYIVKISASNEVGEGPFPNSVELAVLPKDASESNQRPKRLDSSDAKVYSGYYHLDQKSMTGIAVGVGIALTCILICVLILIYRSKARKSSASKTTQSGTQPLSRASASVAAGSDMGKNLERATENEESSVPMMPSCFIDAKGGTDLIINSYGPIIKNNPKKKWRFFQDTKKIKVEQTQRRITQTVCFYQPGTTVLISDEDSPSSPGQTTSFPRPFGPTTLDTEHSANSEGSHETGDSGRFSHESNDEIHLSSVISSTPPTSNSLTCGDSDGDAAPKKHGDPAQPLPAEQTSAPQPTPAGLRHAAESVPV.

The signal sequence occupies residues 1 to 23 (MAPPVRPGMLPLLLLLLLPPLGS). Ig-like domains lie at 24-124 (VPGV…AHLT), 126-217 (STIS…ASLT), 230-317 (PTII…ATLT), and 322-406 (PSFV…ARLT). Residues 24–944 (VPGVWSFSEL…YYHLDQKSMT (921 aa)) are Extracellular-facing. 2 cysteine pairs are disulfide-bonded: Cys54–Cys107 and Cys150–Cys200. Asn84 carries an N-linked (GlcNAc...) asparagine glycan. The N-linked (GlcNAc...) asparagine glycan is linked to Asn238. Cystine bridges form between Cys251/Cys299 and Cys343/Cys390. Fibronectin type-III domains lie at 416–510 (APYN…TLED), 512–608 (PLRP…TPKA), 613–712 (APKS…VRDR), 719–812 (PPHH…TLPE), and 817–912 (PPVG…VLPK). Asn625 is a glycosylation site (N-linked (GlcNAc...) asparagine). Residues 945-965 (GIAVGVGIALTCILICVLILI) form a helical membrane-spanning segment. The Cytoplasmic portion of the chain corresponds to 966–1193 (YRSKARKSSA…LRHAAESVPV (228 aa)). Disordered regions lie at residues 974–1018 (SASK…PMMP) and 1078–1193 (VLIS…SVPV). Polar residues-rich tracts occupy residues 978–990 (TTQS…SRAS) and 1086–1095 (PSSPGQTTSF). Residues 1105–1133 (DTEHSANSEGSHETGDSGRFSHESNDEIH) show a composition bias toward basic and acidic residues. Positions 1136–1150 (SVISSTPPTSNSLTC) are enriched in polar residues.

This sequence belongs to the immunoglobulin superfamily. DCC family.

It localises to the membrane. Functionally, may play a role in anteroposterior axis elongation. This Rattus norvegicus (Rat) protein is Protogenin.